A 116-amino-acid polypeptide reads, in one-letter code: Large ribosomal subunit protein uL18 (116 aa).

The protein belongs to the universal ribosomal protein uL18 family. In terms of assembly, part of the 50S ribosomal subunit; part of the 5S rRNA/L5/L18/L25 subcomplex. Contacts the 5S and 23S rRNAs.

This is one of the proteins that bind and probably mediate the attachment of the 5S RNA into the large ribosomal subunit, where it forms part of the central protuberance. The protein is Large ribosomal subunit protein uL18 of Shewanella woodyi (strain ATCC 51908 / MS32).